We begin with the raw amino-acid sequence, 144 residues long: Large ribosomal subunit protein uL14 (144 aa).

The protein belongs to the universal ribosomal protein uL14 family. Part of the 50S ribosomal subunit. Forms a cluster with proteins L3 and L24e, part of which may contact the 16S rRNA in 2 intersubunit bridges.

Functionally, binds to 23S rRNA. Forms part of two intersubunit bridges in the 70S ribosome. The polypeptide is Large ribosomal subunit protein uL14 (Pyrobaculum aerophilum (strain ATCC 51768 / DSM 7523 / JCM 9630 / CIP 104966 / NBRC 100827 / IM2)).